We begin with the raw amino-acid sequence, 53 residues long: MAVPKKRTSRSKTNSRFANWLNKSNLQAQRAISKAKSITNKKNTVNDETIETE.

It belongs to the bacterial ribosomal protein bL32 family.

It localises to the plastid. The protein localises to the chloroplast. The chain is Large ribosomal subunit protein bL32c (rpl32) from Guillardia theta (Cryptophyte).